Consider the following 426-residue polypeptide: Dihydroorotase (426 aa).

Histidine 58 and histidine 60 together coordinate Zn(2+). Residues 60 to 62 (HLR) and asparagine 92 each bind substrate. Residues aspartate 150, histidine 177, and histidine 230 each contribute to the Zn(2+) site. Asparagine 276 serves as a coordination point for substrate. Position 303 (aspartate 303) interacts with Zn(2+). Aspartate 303 is a catalytic residue. Residues histidine 307 and 321 to 322 (FG) each bind substrate.

Belongs to the metallo-dependent hydrolases superfamily. DHOase family. Class I DHOase subfamily. Zn(2+) is required as a cofactor.

It catalyses the reaction (S)-dihydroorotate + H2O = N-carbamoyl-L-aspartate + H(+). It participates in pyrimidine metabolism; UMP biosynthesis via de novo pathway; (S)-dihydroorotate from bicarbonate: step 3/3. In terms of biological role, catalyzes the reversible cyclization of carbamoyl aspartate to dihydroorotate. This is Dihydroorotase from Listeria monocytogenes serotype 4a (strain HCC23).